The chain runs to 337 residues: Ketol-acid reductoisomerase (NADP(+)) (337 aa).

The region spanning 2-182 (AKIFYDNDAD…GATRAGVLLT (181 aa)) is the KARI N-terminal Rossmann domain. NADP(+) is bound by residues 25–28 (YGSQ), S51, S53, and 83–86 (DTSQ). H108 is an active-site residue. G134 contacts NADP(+). Positions 183–328 (TFAEETETDL…ANLRKMMPFI (146 aa)) constitute a KARI C-terminal knotted domain. 4 residues coordinate Mg(2+): D191, E195, E227, and E231. S252 contributes to the substrate binding site.

Belongs to the ketol-acid reductoisomerase family. Mg(2+) serves as cofactor.

It carries out the reaction (2R)-2,3-dihydroxy-3-methylbutanoate + NADP(+) = (2S)-2-acetolactate + NADPH + H(+). The catalysed reaction is (2R,3R)-2,3-dihydroxy-3-methylpentanoate + NADP(+) = (S)-2-ethyl-2-hydroxy-3-oxobutanoate + NADPH + H(+). Its pathway is amino-acid biosynthesis; L-isoleucine biosynthesis; L-isoleucine from 2-oxobutanoate: step 2/4. It functions in the pathway amino-acid biosynthesis; L-valine biosynthesis; L-valine from pyruvate: step 2/4. In terms of biological role, involved in the biosynthesis of branched-chain amino acids (BCAA). Catalyzes an alkyl-migration followed by a ketol-acid reduction of (S)-2-acetolactate (S2AL) to yield (R)-2,3-dihydroxy-isovalerate. In the isomerase reaction, S2AL is rearranged via a Mg-dependent methyl migration to produce 3-hydroxy-3-methyl-2-ketobutyrate (HMKB). In the reductase reaction, this 2-ketoacid undergoes a metal-dependent reduction by NADPH to yield (R)-2,3-dihydroxy-isovalerate. The protein is Ketol-acid reductoisomerase (NADP(+)) of Sorangium cellulosum (strain So ce56) (Polyangium cellulosum (strain So ce56)).